The following is a 219-amino-acid chain: GTP cyclohydrolase-2 (219 aa).

51-55 (RIHSE) serves as a coordination point for GTP. Cys56, Cys67, and Cys69 together coordinate Zn(2+). Residues Gln72, 94-96 (EGR), and Thr116 each bind GTP. Asp128 acts as the Proton acceptor in catalysis. Arg130 functions as the Nucleophile in the catalytic mechanism. The GTP site is built by Thr151 and Lys156.

The protein belongs to the GTP cyclohydrolase II family. Zn(2+) is required as a cofactor.

It catalyses the reaction GTP + 4 H2O = 2,5-diamino-6-hydroxy-4-(5-phosphoribosylamino)-pyrimidine + formate + 2 phosphate + 3 H(+). It participates in cofactor biosynthesis; riboflavin biosynthesis; 5-amino-6-(D-ribitylamino)uracil from GTP: step 1/4. In terms of biological role, catalyzes the conversion of GTP to 2,5-diamino-6-ribosylamino-4(3H)-pyrimidinone 5'-phosphate (DARP), formate and pyrophosphate. The chain is GTP cyclohydrolase-2 from Pasteurella multocida (strain Pm70).